We begin with the raw amino-acid sequence, 178 residues long: CASP-like protein 5A1 (178 aa).

The disordered stretch occupies residues M1 to T24. At M1–T37 the chain is on the cytoplasmic side. A helical membrane pass occupies residues A38–M58. Topologically, residues A59–A69 are extracellular. Residues F70 to V90 traverse the membrane as a helical segment. The Cytoplasmic segment spans residues D91 to R105. The chain crosses the membrane as a helical span at residues A106–C126. At S127–T152 the chain is on the extracellular side. Residues A153–W173 form a helical membrane-spanning segment. Residues S174–R178 are Cytoplasmic-facing.

Belongs to the Casparian strip membrane proteins (CASP) family. As to quaternary structure, homodimer and heterodimers.

The protein resides in the cell membrane. The protein is CASP-like protein 5A1 of Brachypodium distachyon (Purple false brome).